A 157-amino-acid polypeptide reads, in one-letter code: 3-hydroxyacyl-[acyl-carrier-protein] dehydratase FabZ (157 aa).

Residue His-58 is part of the active site.

The protein belongs to the thioester dehydratase family. FabZ subfamily.

It localises to the cytoplasm. The enzyme catalyses a (3R)-hydroxyacyl-[ACP] = a (2E)-enoyl-[ACP] + H2O. In terms of biological role, involved in unsaturated fatty acids biosynthesis. Catalyzes the dehydration of short chain beta-hydroxyacyl-ACPs and long chain saturated and unsaturated beta-hydroxyacyl-ACPs. This is 3-hydroxyacyl-[acyl-carrier-protein] dehydratase FabZ from Brucella melitensis biotype 2 (strain ATCC 23457).